The following is an 807-amino-acid chain: Glycerol-3-phosphate acyltransferase (807 aa).

The HXXXXD motif signature appears at 305 to 310; sequence CHRSHM.

This sequence belongs to the GPAT/DAPAT family.

The protein resides in the cell inner membrane. It carries out the reaction sn-glycerol 3-phosphate + an acyl-CoA = a 1-acyl-sn-glycero-3-phosphate + CoA. The protein operates within phospholipid metabolism; CDP-diacylglycerol biosynthesis; CDP-diacylglycerol from sn-glycerol 3-phosphate: step 1/3. In Klebsiella pneumoniae (strain 342), this protein is Glycerol-3-phosphate acyltransferase.